A 426-amino-acid chain; its full sequence is Serine--tRNA ligase (426 aa).

230–232 is an L-serine binding site; the sequence is TSE. 261-263 lines the ATP pocket; it reads RSE. Residue Glu-284 coordinates L-serine. Residue 348–351 participates in ATP binding; that stretch reads EISS. An L-serine-binding site is contributed by Ser-384.

It belongs to the class-II aminoacyl-tRNA synthetase family. Type-1 seryl-tRNA synthetase subfamily. As to quaternary structure, homodimer. The tRNA molecule binds across the dimer.

It is found in the cytoplasm. The catalysed reaction is tRNA(Ser) + L-serine + ATP = L-seryl-tRNA(Ser) + AMP + diphosphate + H(+). It carries out the reaction tRNA(Sec) + L-serine + ATP = L-seryl-tRNA(Sec) + AMP + diphosphate + H(+). It participates in aminoacyl-tRNA biosynthesis; selenocysteinyl-tRNA(Sec) biosynthesis; L-seryl-tRNA(Sec) from L-serine and tRNA(Sec): step 1/1. Functionally, catalyzes the attachment of serine to tRNA(Ser). Is also able to aminoacylate tRNA(Sec) with serine, to form the misacylated tRNA L-seryl-tRNA(Sec), which will be further converted into selenocysteinyl-tRNA(Sec). This Sphingopyxis alaskensis (strain DSM 13593 / LMG 18877 / RB2256) (Sphingomonas alaskensis) protein is Serine--tRNA ligase.